A 146-amino-acid chain; its full sequence is Large ribosomal subunit protein uL15 (146 aa).

Positions 1 to 56 are disordered; the sequence is MKLHELRAAEGANKASKRVGRGTGSGLGKTSGKGQNGQNSRSGGGVRPGFEGGQMP. Gly residues-rich tracts occupy residues 21-35 and 42-52; these read RGTGSGLGKTSGKGQ and SGGGVRPGFEG.

Belongs to the universal ribosomal protein uL15 family. Part of the 50S ribosomal subunit.

Functionally, binds to the 23S rRNA. This chain is Large ribosomal subunit protein uL15, found in Clostridium botulinum (strain Loch Maree / Type A3).